The chain runs to 251 residues: Glucosamine-6-phosphate deaminase (251 aa).

Residue Asp73 is the Proton acceptor; for enolization step of the active site. The active-site For ring-opening step is Asn142. The Proton acceptor; for ring-opening step role is filled by His144. Residue Glu149 is the For ring-opening step of the active site.

It belongs to the glucosamine/galactosamine-6-phosphate isomerase family. NagB subfamily.

The enzyme catalyses alpha-D-glucosamine 6-phosphate + H2O = beta-D-fructose 6-phosphate + NH4(+). Its pathway is amino-sugar metabolism; N-acetylneuraminate degradation; D-fructose 6-phosphate from N-acetylneuraminate: step 5/5. In terms of biological role, catalyzes the reversible isomerization-deamination of glucosamine 6-phosphate (GlcN6P) to form fructose 6-phosphate (Fru6P) and ammonium ion. The polypeptide is Glucosamine-6-phosphate deaminase (Rhodopirellula baltica (strain DSM 10527 / NCIMB 13988 / SH1)).